Consider the following 584-residue polypeptide: Probable pectinesterase/pectinesterase inhibitor (584 aa).

Positions 1–22 are cleaved as a signal peptide; that stretch reads MAVGKIVISVASMLLVVGVAIG. Residues 40-191 form a pectinesterase inhibitor region; sequence NSHQKAVESL…KILSSNAIDI (152 aa). N91 and N105 each carry an N-linked (GlcNAc...) asparagine glycan. Residues 246–267 form a disordered region; it reads AQAGRPGAPADEGIGEGGGGGG. The interval 272-571 is pectinesterase; sequence THVVAKDGSG…TVANWLTPAN (300 aa). Residues T349 and Q379 each coordinate substrate. D402 serves as the catalytic Proton donor; for pectinesterase activity. The active-site Nucleophile; for pectinesterase activity is the D423. The substrate site is built by R492 and W494.

In the N-terminal section; belongs to the PMEI family. It in the C-terminal section; belongs to the pectinesterase family. As to expression, pollen, and at much lower levels in pistils and petals.

The protein localises to the secreted. The protein resides in the cell wall. The enzyme catalyses [(1-&gt;4)-alpha-D-galacturonosyl methyl ester](n) + n H2O = [(1-&gt;4)-alpha-D-galacturonosyl](n) + n methanol + n H(+). Its pathway is glycan metabolism; pectin degradation; 2-dehydro-3-deoxy-D-gluconate from pectin: step 1/5. Functionally, acts in the modification of cell walls via demethylesterification of cell wall pectin. The protein is Probable pectinesterase/pectinesterase inhibitor (BP19) of Brassica napus (Rape).